A 388-amino-acid chain; its full sequence is Succinate--CoA ligase [ADP-forming] subunit beta (388 aa).

The ATP-grasp domain maps to 9 to 244 (KQLFAEFGLP…PSQEDKREAH (236 aa)). ATP is bound by residues lysine 46, 53–55 (GRG), glutamate 99, serine 102, and glutamate 107. Residues asparagine 199 and aspartate 213 each contribute to the Mg(2+) site. Substrate is bound by residues asparagine 264 and 321–323 (GIV).

It belongs to the succinate/malate CoA ligase beta subunit family. In terms of assembly, heterotetramer of two alpha and two beta subunits. Requires Mg(2+) as cofactor.

The catalysed reaction is succinate + ATP + CoA = succinyl-CoA + ADP + phosphate. It catalyses the reaction GTP + succinate + CoA = succinyl-CoA + GDP + phosphate. It functions in the pathway carbohydrate metabolism; tricarboxylic acid cycle; succinate from succinyl-CoA (ligase route): step 1/1. Functionally, succinyl-CoA synthetase functions in the citric acid cycle (TCA), coupling the hydrolysis of succinyl-CoA to the synthesis of either ATP or GTP and thus represents the only step of substrate-level phosphorylation in the TCA. The beta subunit provides nucleotide specificity of the enzyme and binds the substrate succinate, while the binding sites for coenzyme A and phosphate are found in the alpha subunit. This Vibrio vulnificus (strain CMCP6) protein is Succinate--CoA ligase [ADP-forming] subunit beta.